Here is a 158-residue protein sequence, read N- to C-terminus: MKDESVLNVLMYLFKNHMQENCTLDLGEKKLLVQLEELGFHRTVIDQALSWLNNLSYSAREPMQLPQKNSFRVFSDYECDLLDTECRRFLITLEQQAILNPHTRELVINQALELSCEGIDVSLLKWVTLMVLFNQSSEKEALASMELLVLDDTVGGIH.

It belongs to the Smg family.

This chain is Protein Smg homolog, found in Coxiella burnetii (strain Dugway 5J108-111).